We begin with the raw amino-acid sequence, 475 residues long: MEIOTIC F-BOX protein MOF (475 aa).

Residues 1-58 (MRRERDATQIPENPMEGIPQTAAAAAAAAAAEASEPPRKRARVDGGGGGAGEEEEDRL) form a disordered region. Positions 22–33 (AAAAAAAAAAEA) are enriched in low complexity. The F-box domain occupies 55 to 91 (EDRLSDLPDCLLEDILAHLGSRQAVQTSVLSRRWRNL).

It belongs to the F-box protein family. FBX subfamily. In terms of assembly, part of a SCF (SKP1-CUL1-F-box protein) E3 ubiquitin-protein ligase complex. Interacts (via F-box domain) directly with SKP1. In terms of tissue distribution, highly expressed in the stem, leaf and in the anther during meiosis. Weakly expressed in roots and lemma/palea.

Its subcellular location is the nucleus. The protein localises to the chromosome. It participates in protein modification; protein ubiquitination. Probable component of a SCF (SKP1-CULLIN-F-box protein) E3 ubiquitin-protein ligase complex and may function through the ubiquitin-mediated protein degradation or signaling pathway. Required for male meiotic prophase I progression. Required for telomere bouquet formation, homologous chromosome pairing and for the formation of the synaptonemal complex (SC), which stabilizes initial chromosomal axial associations and promotes crossover formation. Involved in meiotic DNA double-strand break (DSB) end-processing and repair, and is important in the recruitment of DSB repair proteins to the DSB sites. This chain is MEIOTIC F-BOX protein MOF, found in Oryza sativa subsp. japonica (Rice).